The primary structure comprises 283 residues: Arsenite methyltransferase (283 aa).

This sequence belongs to the methyltransferase superfamily. Arsenite methyltransferase family.

The catalysed reaction is arsenic triglutathione + [thioredoxin]-dithiol + S-adenosyl-L-methionine + 2 H2O = methylarsonous acid + [thioredoxin]-disulfide + 3 glutathione + S-adenosyl-L-homocysteine + H(+). The enzyme catalyses arsenic triglutathione + 2 [thioredoxin]-dithiol + 2 S-adenosyl-L-methionine + H2O = dimethylarsinous acid + 2 [thioredoxin]-disulfide + 3 glutathione + 2 S-adenosyl-L-homocysteine + 2 H(+). It carries out the reaction arsenic triglutathione + 3 [thioredoxin]-dithiol + 3 S-adenosyl-L-methionine = trimethylarsine + 3 [thioredoxin]-disulfide + 3 glutathione + 3 S-adenosyl-L-homocysteine + 3 H(+). Its function is as follows. Catalyzes the transfer of a methyl group from AdoMet to arsenite, producing methylated arsenicals. Involved in the conversion of As(III) to a number of di- and trimethylated species, with trimethylarsine as the end product. Reduces the arsenic toxicity in the cell and may contribute to the global arsenic cycling. The chain is Arsenite methyltransferase from Rhodopseudomonas palustris (strain ATCC BAA-98 / CGA009).